Reading from the N-terminus, the 140-residue chain is Small ribosomal subunit protein uS12 (140 aa).

At Asp102 the chain carries 3-methylthioaspartic acid.

Belongs to the universal ribosomal protein uS12 family. Part of the 30S ribosomal subunit. Contacts proteins S8 and S17. May interact with IF1 in the 30S initiation complex.

Functionally, with S4 and S5 plays an important role in translational accuracy. Its function is as follows. Interacts with and stabilizes bases of the 16S rRNA that are involved in tRNA selection in the A site and with the mRNA backbone. Located at the interface of the 30S and 50S subunits, it traverses the body of the 30S subunit contacting proteins on the other side and probably holding the rRNA structure together. The combined cluster of proteins S8, S12 and S17 appears to hold together the shoulder and platform of the 30S subunit. This is Small ribosomal subunit protein uS12 from Bacillus anthracis (strain A0248).